The chain runs to 334 residues: Porphobilinogen deaminase (334 aa).

Cys250 carries the post-translational modification S-(dipyrrolylmethanemethyl)cysteine.

Belongs to the HMBS family. Monomer. Dipyrromethane serves as cofactor.

It carries out the reaction 4 porphobilinogen + H2O = hydroxymethylbilane + 4 NH4(+). The protein operates within porphyrin-containing compound metabolism; protoporphyrin-IX biosynthesis; coproporphyrinogen-III from 5-aminolevulinate: step 2/4. In terms of biological role, tetrapolymerization of the monopyrrole PBG into the hydroxymethylbilane pre-uroporphyrinogen in several discrete steps. This is Porphobilinogen deaminase from Cutibacterium acnes (strain DSM 16379 / KPA171202) (Propionibacterium acnes).